Consider the following 81-residue polypeptide: Costars family protein ABRACL (81 aa).

It belongs to the costars family.

The protein is Costars family protein ABRACL (abracl) of Xenopus laevis (African clawed frog).